A 346-amino-acid polypeptide reads, in one-letter code: Small ribosomal subunit biogenesis GTPase RsgA (346 aa).

The disordered stretch occupies residues 1 to 25; the sequence is MAKRKLTQNQTRRIQSNNAKTLHRH. Over residues 7–20 the composition is skewed to polar residues; the sequence is TQNQTRRIQSNNAK. In terms of domain architecture, CP-type G spans 103–271; the sequence is ENEISRPDYY…LIDSPGIREF (169 aa). GTP-binding positions include 159 to 162 and 213 to 221; these read NKVD and GQSGVGKSS. 4 residues coordinate Zn(2+): cysteine 295, cysteine 300, histidine 302, and cysteine 308.

The protein belongs to the TRAFAC class YlqF/YawG GTPase family. RsgA subfamily. As to quaternary structure, monomer. Associates with 30S ribosomal subunit, binds 16S rRNA. Zn(2+) serves as cofactor.

It is found in the cytoplasm. In terms of biological role, one of several proteins that assist in the late maturation steps of the functional core of the 30S ribosomal subunit. Helps release RbfA from mature subunits. May play a role in the assembly of ribosomal proteins into the subunit. Circularly permuted GTPase that catalyzes slow GTP hydrolysis, GTPase activity is stimulated by the 30S ribosomal subunit. In Haemophilus influenzae (strain ATCC 51907 / DSM 11121 / KW20 / Rd), this protein is Small ribosomal subunit biogenesis GTPase RsgA.